The sequence spans 210 residues: Actin-related protein 3C (210 aa).

A signal peptide spans 1–21 (MFESFNVPGLYIAVQAVLALA).

This sequence belongs to the actin family. As to expression, expressed in kidney, stomach, spleen, bone marrow, uterus, testis, placenta, skeletal muscle, mammary gland, lung, fetal liver, and fetal kidney, but not detected in small intestine, brain, and thymus. Expressed in low-metastatic lung adenocarcinoma cells but not in high-metastatic ones.

Its function is as follows. May play a role in the suppression of metastatic potential in lung adenoma carcinoma cells. The chain is Actin-related protein 3C (ACTR3C) from Homo sapiens (Human).